A 452-amino-acid chain; its full sequence is MDPNTEGTTTKKYTSQRRTIDISASYDRLYFLKKHGQENSSYIEAETSYNAHILPPDAYGFHGHAINTATKFTHLSSNKVKHVIPALTWTPEGRRLVVATYNGEFSLWSGSSFNFESIMQAHDSAVTVMTYSHTGDWMVSGSADGELKIWQPNFNMVKVMDQAHMECVREISFSPTDQKFVSCSDDNVLKIWNFSNGQQERVLSGHHWDVKSCDWHPKMGLIVSGSKDNLIKFWDPRSGSCVSTMLGFKHTIISTKFQPKQGNLLSVISKDKTCKVYDIRQQAKELFSVRDDVDYMTLQWHPIDETVFTVGCYDGSIKHFDLSQENQPNKPTHNIPYAHEKCVTSLAYSPIGHIMASASKDRTIRFWTRSRAVDPNAFDDPTYNNEKVNAWYFGINNNINAVRNKTEHGVALPPSEDSNNNENGDGSRSVEPERPSVSTLPGLGSGLPGLSF.

7 WD repeats span residues 79-118, 121-160, 163-202, 205-244, 247-287, 290-330, and 338-377; these read KVKHVIPALTWTPEGRRLVVATYNGEFSLWSGSSFNFESI, AHDSAVTVMTYSHTGDWMVSGSADGELKIWQPNFNMVKVM, AHMECVREISFSPTDQKFVSCSDDNVLKIWNFSNGQQERV, GHHWDVKSCDWHPKMGLIVSGSKDNLIKFWDPRSGSCVST, GFKH…KELF, RDDV…QPNK, and AHEKCVTSLAYSPIGHIMASASKDRTIRFWTRSRAVDPNA. The interval 409-452 is disordered; the sequence is GVALPPSEDSNNNENGDGSRSVEPERPSVSTLPGLGSGLPGLSF. Residues 416 to 426 are compositionally biased toward polar residues; the sequence is EDSNNNENGDG. The segment covering 443–452 has biased composition (gly residues); that stretch reads LGSGLPGLSF.

It localises to the nucleus. Required for 3'-end cleavage and polyadenylation of pre-mRNAs. Also involved in chromosome segregation where it has a role in chromosome attachment to the mitotic spindle. The protein is Polyadenylation factor subunit 2 (PFS2) of Kluyveromyces lactis (strain ATCC 8585 / CBS 2359 / DSM 70799 / NBRC 1267 / NRRL Y-1140 / WM37) (Yeast).